We begin with the raw amino-acid sequence, 1102 residues long: WASH complex subunit 4 (1102 aa).

Belongs to the SWIP family. As to quaternary structure, component of the WASH complex.

The protein localises to the early endosome. Its function is as follows. Acts at least in part as component of the WASH complex which may regulate wash nucleation-promoting factor (NPF) activity and is required for its membrane targeting during endosomal sorting. During embryogenesis, not involved in the wash-dependent developmental migration of hemocytes anteriorly from the tail. The protein is WASH complex subunit 4 of Drosophila melanogaster (Fruit fly).